We begin with the raw amino-acid sequence, 307 residues long: O-acetylserine dependent cystathionine beta-synthase (307 aa).

K44 carries the post-translational modification N6-(pyridoxal phosphate)lysine. Residues N74, 178-182, and S265 contribute to the pyridoxal 5'-phosphate site; that span reads GSGGT.

The protein belongs to the cysteine synthase/cystathionine beta-synthase family. Pyridoxal 5'-phosphate serves as cofactor.

It catalyses the reaction O-acetyl-L-serine + L-homocysteine = L,L-cystathionine + acetate + H(+). Catalyzes the conversion of O-acetylserine and homocysteine to cystathionine. This is O-acetylserine dependent cystathionine beta-synthase (mccA) from Bacillus subtilis (strain 168).